Here is an 873-residue protein sequence, read N- to C-terminus: Tetratricopeptide repeat protein 16 (873 aa).

A disordered region spans residues methionine 1–proline 20. TPR repeat units follow at residues valine 61–leucine 94, aspartate 96–asparagine 128, threonine 136–lysine 169, alanine 251–aspartate 284, proline 285–aspartate 318, leucine 331–glutamate 364, lysine 365–aspartate 398, and glycine 406–lysine 439. 2 disordered regions span residues glutamate 553 to threonine 626 and serine 639 to valine 873. Acidic residues predominate over residues glycine 571–lysine 582. The span at glutamate 583–glutamate 593 shows a compositional bias: basic and acidic residues. Composition is skewed to polar residues over residues alanine 600–threonine 626, serine 639–glutamate 663, and threonine 675–arginine 693. The span at asparagine 694–serine 708 shows a compositional bias: basic residues. Positions lysine 709–glutamate 750 are enriched in polar residues. Basic residues predominate over residues lysine 763–arginine 784. Composition is skewed to polar residues over residues arginine 800–serine 828 and glycine 836–lysine 860.

In Homo sapiens (Human), this protein is Tetratricopeptide repeat protein 16 (TTC16).